We begin with the raw amino-acid sequence, 288 residues long: Protease HtpX (288 aa).

The next 2 helical transmembrane spans lie at 4–24 and 36–56; these read VMLFLITNLAVVLVLSVVLNI and LSGLLVMAAVFGFGGAFISLM. Histidine 143 provides a ligand contact to Zn(2+). Glutamate 144 is an active-site residue. Residue histidine 147 participates in Zn(2+) binding. 2 consecutive transmembrane segments (helical) span residues 151–171 and 193–213; these read GDMVTMTLMQGVVNTFVIFLS and MVYFAVSIALELVFGFLASFI. Glutamate 222 contributes to the Zn(2+) binding site.

The protein belongs to the peptidase M48B family. It depends on Zn(2+) as a cofactor.

Its subcellular location is the cell inner membrane. The protein is Protease HtpX of Vibrio vulnificus (strain YJ016).